The chain runs to 673 residues: UvrABC system protein B (673 aa).

The region spanning 26 to 183 (EGLEDGLAHQ…RRLAELQYTR (158 aa)) is the Helicase ATP-binding domain. 39-46 (GVTGSGKT) lines the ATP pocket. The Beta-hairpin motif lies at 92–115 (YYDYYQPEAYVPSSDTFIEKDASV). The region spanning 431–597 (QVDDLLSEIR…GLNKKVVDIL (167 aa)) is the Helicase C-terminal domain. One can recognise a UVR domain in the interval 633-668 (QQKIHELEGQMMQHAQNLEFEEAAQIRDQLHQLREL).

This sequence belongs to the UvrB family. As to quaternary structure, forms a heterotetramer with UvrA during the search for lesions. Interacts with UvrC in an incision complex.

The protein localises to the cytoplasm. Functionally, the UvrABC repair system catalyzes the recognition and processing of DNA lesions. A damage recognition complex composed of 2 UvrA and 2 UvrB subunits scans DNA for abnormalities. Upon binding of the UvrA(2)B(2) complex to a putative damaged site, the DNA wraps around one UvrB monomer. DNA wrap is dependent on ATP binding by UvrB and probably causes local melting of the DNA helix, facilitating insertion of UvrB beta-hairpin between the DNA strands. Then UvrB probes one DNA strand for the presence of a lesion. If a lesion is found the UvrA subunits dissociate and the UvrB-DNA preincision complex is formed. This complex is subsequently bound by UvrC and the second UvrB is released. If no lesion is found, the DNA wraps around the other UvrB subunit that will check the other stand for damage. The protein is UvrABC system protein B of Salmonella agona (strain SL483).